An 842-amino-acid polypeptide reads, in one-letter code: Amyloid-beta A4 precursor protein-binding family A member 1 (842 aa).

Disordered regions lie at residues 1–121 (MNHL…DESA), 238–349 (RLHH…EKRD), and 366–439 (KTRT…KESR). Ser-82 is modified (phosphoserine). 2 stretches are compositionally biased toward basic and acidic residues: residues 106–115 (DGYEAERAQD) and 240–258 (HHYD…KEAE). Phosphoserine is present on residues Ser-246, Ser-250, Ser-252, Ser-267, Ser-284, and Ser-289. Thr-309 carries the phosphothreonine modification. Residues Ser-317 and Ser-372 each carry the phosphoserine modification. Thr-375 carries the post-translational modification Phosphothreonine. The span at 392–403 (PTRDCDDQRPVD) shows a compositional bias: basic and acidic residues. Residues 404–421 (GDSPSPGSSSPLGAESSS) are compositionally biased toward low complexity. Phosphoserine is present on residues Ser-406, Ser-408, Ser-413, and Ser-573. Positions 460–648 (LIDGIIFAAN…LLNTQDMYND (189 aa)) constitute a PID domain. The segment at 631–648 (LSQKEYSDLLNTQDMYND) is autoinhibitory helix linker. 2 PDZ domains span residues 661 to 746 (DVFI…NIVR) and 752 to 828 (TVLI…MPAA).

In terms of assembly, part of a multimeric complex containing STXBP1 and STX1A. Interacts with STXBP1. Component of the brain-specific heterotrimeric complex (LIN-10-LIN-2-LIN-7 complex) composed of at least APBA1, CASK, and LIN7, which associates with the motor protein KIF17 to transport vesicles along microtubules. Within the complex, interacts (via PDZ domain) with the motor protein KIF17; the interaction is direct and is required for association of KIF17 with the cargo that is to be transported. Binds to the cytoplasmic domain of amyloid protein (APP). Interacts (via PDZ 1 and 2 domains) with FSPB. Isoform 3 interacts (via its truncated PID domain) with active, GTP-bound RAB6A. Also interacts with GTP-bound RAB6B. Isoform 3 is expressed in brain.

Its subcellular location is the cytoplasm. It is found in the perinuclear region. The protein resides in the nucleus. The protein localises to the golgi apparatus. In terms of biological role, putative function in synaptic vesicle exocytosis by binding to Munc18-1, an essential component of the synaptic vesicle exocytotic machinery. May modulate processing of the amyloid-beta precursor protein (APP) and hence formation of AAP-beta. Component of the LIN-10-LIN-2-LIN-7 complex, which associates with the motor protein KIF17 to transport vesicles containing N-methyl-D-aspartate (NMDA) receptor subunit NR2B along microtubules. This Mus musculus (Mouse) protein is Amyloid-beta A4 precursor protein-binding family A member 1.